A 200-amino-acid chain; its full sequence is Outer-membrane lipoprotein LolB (200 aa).

The first 18 residues, methionine 1–alanine 18, serve as a signal peptide directing secretion. Cysteine 19 is lipidated: N-palmitoyl cysteine. Cysteine 19 carries the S-diacylglycerol cysteine lipid modification.

This sequence belongs to the LolB family. In terms of assembly, monomer.

Its subcellular location is the cell outer membrane. Its function is as follows. Plays a critical role in the incorporation of lipoproteins in the outer membrane after they are released by the LolA protein. This Alkalilimnicola ehrlichii (strain ATCC BAA-1101 / DSM 17681 / MLHE-1) protein is Outer-membrane lipoprotein LolB.